The chain runs to 1404 residues: MKDLLNLFNQQRQTLDFDAIKIALASPDLIRSWSYGEVKKPETINYRTFKPERDGLFCAAIFGPIKDYECLCGKYKRMKHRGVVCEKCGTEVTLAKVRRERMGHIDLASPVAHIWFLKSLPSRIGLMLDMTLRDIERVLYFEAYVVTEPGLTPLERRQLLTEEQYLTARQEYNDDFDAAMGAEAVYELLRTIDLQSEMTRLREEIASTGSETKLKRLTKRIKLIEAFLESGNRPEWMVMTVLPVLPPDLRPLVPLDGGRFATSDLNDLYRRVINRNNRLRRLLELNAPDIIVRNEKRMLQESVDALLDNGRRGRAITGTNKRPLKSLADMIKGKQGRFRQNLLGKRVDYSGRSVITVGPYLKLHQCGLPKKMALELFKPFVFAKLQRRGLATTIKAAKKLVEREEAEVWDILEEVIREHPVLLNRAPTLHRLGIQAFEPVLIEGKAIQLHPLVCTAFNADFDGDQMAVHVPLSLEAQLEARALMMSTNNILSPANGEPIIVPSQDVVLGLYYMSRALENKKGEGMVFANTSEVKRAYDNRVVELHAKVKVRITQVDVEAGGKRSSGTSIVDTTVGRALLSEILPEGLPFQLANTEMTKKNISRLINSSYRLLGLKDTVVFADKLMYTGYAYATRAGVSIGIDDMLIPDEKKGILTEAEAEVLEIQEQYQSGLVTAGERYNKVVDIWSRTSERIAKAMMDTIGTEKVENAKGETIDQKSMNSLYIMADSGARGSQAQIRQLAGMRGLMARPDGSIIETPIKANFREGLNVQEYFNSTHGARKGLADTALKTANSGYLTRRLVDVAQDVVITEIDCGTTEGLIMTPIVEGGDVVEPLRERVLGRVVAEDVYLPGNDEEPIVTRNTLLDEAWVAKLEDASVQSVKVRSTISCESSFGVCARCYGRDLARGHQVNIGEAVGVIAAQSIGEPGTQLTMRTFHIGGAASRAAAVDNITVKTTGSVKFNNLKSVAHASGSLVAVSRSGELSVLDGHGRERERYKLPYGATITAKDGDAVKAGQSVANWDPHNHPIVSEVAGFIRFIDFVDGVTVIEKTDELTGLASREITDPKRRGAQAKELRPIVRIVDAKGNDLTIPNTDLPAQYLLPPRSIVNLQDGAAVGVGDVVAKIPQEASKTRDITGGLPRVADLFEARKPKDPAILAERSGIISFGKDTKGKQRLIIKDTDGSEHEELIPKYRQIIVFEGEHVTKGETVVDGEPSPQDILRLLGVEPLAAYLVKEIQDVYRLQGVKINDKHIEVITRQMLRKVEIVDQGNSKFLNGEQVERQRVIEENARLVKRNELPAKYDPVLLGITKASLATESFISAASFQETTRVLTEAAVRGTRDNLRGLKENVIVGRLIPAGTGLAYHAGRRKASGLTDSEMETLSGKPAAAEPVAAVADAGADEE.

Zn(2+)-binding residues include cysteine 70, cysteine 72, cysteine 85, and cysteine 88. Mg(2+) is bound by residues aspartate 460, aspartate 462, and aspartate 464. Zn(2+) is bound by residues cysteine 814, cysteine 889, cysteine 896, and cysteine 899. Positions 1377 to 1404 (DSEMETLSGKPAAAEPVAAVADAGADEE) are disordered. The span at 1387–1404 (PAAAEPVAAVADAGADEE) shows a compositional bias: low complexity.

It belongs to the RNA polymerase beta' chain family. In terms of assembly, the RNAP catalytic core consists of 2 alpha, 1 beta, 1 beta' and 1 omega subunit. When a sigma factor is associated with the core the holoenzyme is formed, which can initiate transcription. Mg(2+) serves as cofactor. Requires Zn(2+) as cofactor.

The enzyme catalyses RNA(n) + a ribonucleoside 5'-triphosphate = RNA(n+1) + diphosphate. Functionally, DNA-dependent RNA polymerase catalyzes the transcription of DNA into RNA using the four ribonucleoside triphosphates as substrates. This chain is DNA-directed RNA polymerase subunit beta', found in Xanthomonas euvesicatoria pv. vesicatoria (strain 85-10) (Xanthomonas campestris pv. vesicatoria).